A 461-amino-acid chain; its full sequence is Trimethylamine monooxygenase (461 aa).

Residues Ser14, Glu39, Lys40, Gln41, Met47, Trp48, and His64 each contribute to the FAD site. 2 residues coordinate NADP(+): Trp72 and Asn74. 2 residues coordinate FAD: Asn74 and Ala127. NADP(+)-binding residues include Ser206, Ser207, Ser209, Arg230, and Thr231. Positions 319 and 322 each coordinate FAD. Arg413 contributes to the NADP(+) binding site.

Belongs to the FMO family. FAD serves as cofactor.

The catalysed reaction is trimethylamine + NADPH + O2 = trimethylamine N-oxide + NADP(+) + H2O. Its function is as follows. Catalyzes the oxidation of trimethylamine (TMA) to produce trimethylamine N-oxide (TMAO). The produced TMAO is accumulated in the cell, functioning as a piezolyte, improving both growth and survival at high hydrostatic pressure (HHP). The polypeptide is Trimethylamine monooxygenase (Myroides profundi).